Here is a 412-residue protein sequence, read N- to C-terminus: Chorismate synthase (412 aa).

Residues arginine 40 and arginine 46 each coordinate NADP(+). Residues 134–136 (RAS), 255–256 (QA), glycine 299, 314–318 (KPIAT), and arginine 340 each bind FMN.

It belongs to the chorismate synthase family. Homotetramer. Requires FMNH2 as cofactor.

It catalyses the reaction 5-O-(1-carboxyvinyl)-3-phosphoshikimate = chorismate + phosphate. It functions in the pathway metabolic intermediate biosynthesis; chorismate biosynthesis; chorismate from D-erythrose 4-phosphate and phosphoenolpyruvate: step 7/7. Catalyzes the anti-1,4-elimination of the C-3 phosphate and the C-6 proR hydrogen from 5-enolpyruvylshikimate-3-phosphate (EPSP) to yield chorismate, which is the branch point compound that serves as the starting substrate for the three terminal pathways of aromatic amino acid biosynthesis. This reaction introduces a second double bond into the aromatic ring system. This chain is Chorismate synthase, found in Clavibacter michiganensis subsp. michiganensis (strain NCPPB 382).